Consider the following 170-residue polypeptide: Crossover junction endodeoxyribonuclease RuvC (170 aa).

Active-site residues include D11, E71, and D143. Residues D11, E71, and D143 each contribute to the Mg(2+) site.

It belongs to the RuvC family. In terms of assembly, homodimer which binds Holliday junction (HJ) DNA. The HJ becomes 2-fold symmetrical on binding to RuvC with unstacked arms; it has a different conformation from HJ DNA in complex with RuvA. In the full resolvosome a probable DNA-RuvA(4)-RuvB(12)-RuvC(2) complex forms which resolves the HJ. Requires Mg(2+) as cofactor.

It is found in the cytoplasm. The enzyme catalyses Endonucleolytic cleavage at a junction such as a reciprocal single-stranded crossover between two homologous DNA duplexes (Holliday junction).. Functionally, the RuvA-RuvB-RuvC complex processes Holliday junction (HJ) DNA during genetic recombination and DNA repair. Endonuclease that resolves HJ intermediates. Cleaves cruciform DNA by making single-stranded nicks across the HJ at symmetrical positions within the homologous arms, yielding a 5'-phosphate and a 3'-hydroxyl group; requires a central core of homology in the junction. The consensus cleavage sequence is 5'-(A/T)TT(C/G)-3'. Cleavage occurs on the 3'-side of the TT dinucleotide at the point of strand exchange. HJ branch migration catalyzed by RuvA-RuvB allows RuvC to scan DNA until it finds its consensus sequence, where it cleaves and resolves the cruciform DNA. The protein is Crossover junction endodeoxyribonuclease RuvC of Sinorhizobium fredii (strain NBRC 101917 / NGR234).